The chain runs to 150 residues: Large ribosomal subunit protein bL9 (150 aa).

The protein belongs to the bacterial ribosomal protein bL9 family.

Its function is as follows. Binds to the 23S rRNA. In Burkholderia multivorans (strain ATCC 17616 / 249), this protein is Large ribosomal subunit protein bL9.